The primary structure comprises 227 residues: Riboflavin kinase (227 aa).

The tract at residues 1–92 (MSKDYEVFPL…LKRTIDSSTF (92 aa)) is H-T-H motif-like. A riboflavin kinase region spans residues 93–227 (LTLRGYVVPG…GDKVEVVIPV (135 aa)). CDP is bound at residue 102-107 (GLGEGA). Residues Thr131 and Asn133 each contribute to the Mg(2+) site. FMN contacts are provided by Thr194 and Glu202. Position 207–210 (207–210 (VRLR)) interacts with CDP.

The protein belongs to the archaeal riboflavin kinase family. The cofactor is Mg(2+).

It carries out the reaction riboflavin + CTP = CDP + FMN + H(+). It participates in cofactor biosynthesis; FMN biosynthesis; FMN from riboflavin (CTP route): step 1/1. Functionally, catalyzes the CTP-dependent phosphorylation of riboflavin (vitamin B2) to form flavin mononucleotide (FMN). The polypeptide is Riboflavin kinase (ribK) (Thermofilum pendens (strain DSM 2475 / Hrk 5)).